We begin with the raw amino-acid sequence, 226 residues long: Gap junction beta-2 protein (226 aa).

Residues 2–13 (DWGTLQTILGGV) lie within the membrane without spanning it. At 14–20 (NKHSTSI) the chain is on the cytoplasmic side. Residues 21 to 40 (GKIWLTVLFIFRIMILVVAA) form a helical membrane-spanning segment. At 41 to 73 (KEVWGDEQADFVCNTLQPGCKNVCYDHYFPISH) the chain is on the extracellular side. Residues glutamate 42, glycine 45, and glutamate 47 each coordinate Ca(2+). 3 disulfide bridges follow: cysteine 53/cysteine 180, cysteine 60/cysteine 174, and cysteine 64/cysteine 169. Residues 74–94 (IRLWALQLIFVSTPALLVAMH) traverse the membrane as a helical segment. The Cytoplasmic segment spans residues 95–135 (VAYRRHEKKRKFIKGEIKSEFKDIEEIKTQKVRIEGSLWWT). A helical membrane pass occupies residues 136-156 (YTSSIFFRVIFEAAFMYVFYV). The Extracellular portion of the chain corresponds to 157 to 189 (MYDGFSMQRLVKCNAWPCPNTVDCFVSRPTEKT). Residues 190-210 (VFTVFMIAVSGICILLNVTEL) form a helical membrane-spanning segment. Topologically, residues 211–226 (CYLLIRYCSGKSKKPV) are cytoplasmic.

The protein belongs to the connexin family. Beta-type (group I) subfamily. In terms of assembly, a hemichannel or connexon is composed of a hexamer of connexins. A functional gap junction is formed by the apposition of two hemichannels. Forms heteromeric channels with GJB4. Interacts with CNST.

The protein resides in the cell membrane. Its subcellular location is the cell junction. The protein localises to the gap junction. Its function is as follows. Structural component of gap junctions. Gap junctions are dodecameric channels that connect the cytoplasm of adjoining cells. They are formed by the docking of two hexameric hemichannels, one from each cell membrane. Small molecules and ions diffuse from one cell to a neighboring cell via the central pore. The sequence is that of Gap junction beta-2 protein (GJB2) from Gorilla gorilla gorilla (Western lowland gorilla).